A 462-amino-acid polypeptide reads, in one-letter code: MADRISTGELGRRPGQGRVDLLLVGDATRYFLAGSVQKFFSSTAQITLTISNVKKVAALLAANSFDIIFLKVTSTLTAEEQEAVRLIRSGKKKNTHLLFAFVIPEKLRGYISDYGADISFNEPLTLEKVNTVINYWKTYFTNTDMGNTELPPECRLYFQTSCSELGGHFPTDLFLCSELLNNDTGLGLKAPLSSPERNKKASFLHSSKEKLRRERIKFCCEQLRTLLPYVKGRKSDVASVIEATVDYVKQVRESLSPAIMAQITESLQSNKRFSKRQMPIELFLPCTATSQRGDAMLTSAFSPVQEIQLLADQGLNVYSMPAAGGPLEEAVRGQPGSVSEDLYKTRVPSTTLSLNSFHAVRYCSGPVSPHEAAARTNQNISIYLPPTGPSVSSFTPQHCNAMLCPTRPASSSCLCTSGHELPASSRTASSSIFRGFRESDSGHQASQQPTGPSLQPQDSSYF.

The region spanning 200–251 (KASFLHSSKEKLRRERIKFCCEQLRTLLPYVKGRKSDVASVIEATVDYVKQV) is the bHLH domain. The tract at residues 422–462 (PASSRTASSSIFRGFRESDSGHQASQQPTGPSLQPQDSSYF) is disordered. Residues 442–462 (GHQASQQPTGPSLQPQDSSYF) show a composition bias toward polar residues.

The protein resides in the nucleus. Its function is as follows. Probable transcription factor, which may be involved in spermatogenesis and oogenesis. This chain is Spermatogenesis- and oogenesis-specific basic helix-loop-helix-containing protein 2 (Sohlh2), found in Rattus norvegicus (Rat).